The chain runs to 318 residues: MTNSGDEEITPASLKATRKGERVSIGSLLPPSELVRSGESTEHIRVLAETDEDLPPIVVHRGTRRVVDGMHRLWAARFRGDESIEVVFVDGSPADVFVLAVELNRAHGLPLTLDERKSAAAQIMDSHPHWSDRKIARTTGLAASTVASLRSSSTAGTVGRRTGQDGRSRPNDGTDGRQRAAALLARNPNASLREVTRAAGISVGTASDVRARLRRGEPALTARQQAVMKLRPAAAQRSGPDYGRVLENLRKDPSLRFTDLGRRLLRLLDGSVPGSVEQIAQIADGVPEHCRTVVVDMARECAAAWQHLADQLADRDTA.

The span at 146 to 156 (VASLRSSSTAG) shows a compositional bias: polar residues. The tract at residues 146–176 (VASLRSSSTAGTVGRRTGQDGRSRPNDGTDG) is disordered. Residues 162–176 (TGQDGRSRPNDGTDG) show a composition bias toward basic and acidic residues.

This sequence belongs to the ParB family.

Functionally, transcription regulator that specifically activates expression of genes involved in the novobiocin biosynthesis pathway. Binds 5'-GTTCRACTG(N)(11)CRGTYGAAC-3' DNA sequence. The sequence is that of Transcriptional regulator NovG (novG) from Streptomyces niveus (Streptomyces spheroides).